Here is a 789-residue protein sequence, read N- to C-terminus: Alpha-glucosidase 2 (789 aa).

2 disordered regions span residues 1–24 (MTGL…PRVI) and 512–531 (ELNP…ASHP). The active-site Proton donor is D523. The active-site Proton acceptor is E756.

This sequence belongs to the glycosyl hydrolase 63 family.

Its pathway is glycan metabolism; N-glycan degradation. This is Alpha-glucosidase 2 (GCS2) from Arabidopsis thaliana (Mouse-ear cress).